The chain runs to 675 residues: E3 ubiquitin-protein ligase COP1 (675 aa).

The disordered stretch occupies residues 1–40 (MEEISTDPVVPAVKPDPRTSSVGEGANRHENDDGGSGGSE). Residues C52, C55, C67, H69, C72, C75, C86, and C89 each coordinate Zn(2+). The RING-type zinc finger occupies 52-90 (CPICMQIIKDAFLTACGHSFCYMCIITHLRNKSDCPCCS). The tract at residues 67–177 (CGHSFCYMCI…LDFLHCLRKQ (111 aa)) is CLS (cytoplasmic localization signal). The SNLS (subnuclear localization signal) stretch occupies residues 120 to 177 (ASPLDQFREALQRGCDVSIKEVDNLLTLLAERKRKMEQEEAERNMQILLDFLHCLRKQ). Positions 134–201 (CDVSIKEVDN…IKEDINAVER (68 aa)) form a coiled coil. Residues 261–290 (EGKAQGSSHGLPKKDALSGSDSQSLNQSTV) are disordered. Over residues 279 to 290 (GSDSQSLNQSTV) the composition is skewed to polar residues. The Bipartite nuclear localization signal signature appears at 294 to 317 (RKKRIHAQFNDLQECYLQKRRQLA). WD repeat units lie at residues 369-408 (HSANIVSSIEFDRDDELFATAGVSRCIKVFDFSSVVNEPA), 418-458 (STRS…SLME), 461-501 (EHEK…SVIN), 503-543 (DMKA…QPLH), 547-585 (GHKKAVSYVKFLSNNELASASTDSTLRLWDVKDNLPVRT), 588-627 (GHTNEKNFVGLTVNSEYLACGSETNEVYVYHKEITRPVTS), and 642-675 (AGSYFISAVCWKSDSPTMLTANSQGTIKVLVLAA). The tract at residues 593-595 (KNF) is binding of human TRIB1 COP1-binding-motif.

In terms of assembly, homodimer. Interacts with HY5, HYH, BBX24/STO, BBX25/STH, CIP8, COP10, SPA1, SPA2, SPA3, SPA4 and UVR8 and phosphorylated PHYA. Light induces dissociation of the SPA1/COP1 complex. Interacts with HRT/RPP8 and triggers it to the 26s proteasome. Binds to CRY2; this competitive interaction prevents triggering to proteasome of other binding proteins. Binds to SHW1 in the nucleus. Bonds to CIP7. Interacts with CSU2. Binds to CIP1. Interacts directly with DHU1. Associates to UNE10/PIF8. Binds directly to PCH1 and PCHL. In terms of processing, autoubiquitinated.

It localises to the nucleus. The protein localises to the cytoplasm. It catalyses the reaction S-ubiquitinyl-[E2 ubiquitin-conjugating enzyme]-L-cysteine + [acceptor protein]-L-lysine = [E2 ubiquitin-conjugating enzyme]-L-cysteine + N(6)-ubiquitinyl-[acceptor protein]-L-lysine.. It participates in protein modification; protein ubiquitination. Functionally, E3 ubiquitin-protein ligase that acts as a repressor of photomorphogenesis and as an activator of etiolation in darkness. E3 ubiquitin ligases accept ubiquitin from an E2 ubiquitin-conjugating enzyme in the form of a thioester and then directly transfers the ubiquitin to targeted substrates. Represses photomorphogenesis in darkness by mediating ubiquitination and subsequent proteasomal degradation of light-induced transcription factors such as HY5, HYH and LAF1. Down-regulates MYB21, probably via ubiquitination process. Light stimuli abrogate the repression of photomorphogenesis, possibly due to its localization to the cytoplasm. Could play a role in switching between skotomorphogenetic and photomorphogenetic pathways. Mediates the ubiquitination-dependent degradation of HY5 in the darkness during seedling development (e.g. hypocotyl growth). Represses CIP7 in darkness. Triggers ubiquitination and subsequent protein degradation of UNE10/PIF8, PCH1 and PCHL in the dark. This Arabidopsis thaliana (Mouse-ear cress) protein is E3 ubiquitin-protein ligase COP1.